The following is a 291-amino-acid chain: Pyridoxal 5'-phosphate synthase subunit PdxS (291 aa).

Residue Asp23 participates in D-ribose 5-phosphate binding. Lys80 serves as the catalytic Schiff-base intermediate with D-ribose 5-phosphate. Residue Gly152 coordinates D-ribose 5-phosphate. Arg164 is a binding site for D-glyceraldehyde 3-phosphate. D-ribose 5-phosphate contacts are provided by residues Gly213 and 234 to 235 (GS).

The protein belongs to the PdxS/SNZ family. In the presence of PdxT, forms a dodecamer of heterodimers.

It catalyses the reaction aldehydo-D-ribose 5-phosphate + D-glyceraldehyde 3-phosphate + L-glutamine = pyridoxal 5'-phosphate + L-glutamate + phosphate + 3 H2O + H(+). It functions in the pathway cofactor biosynthesis; pyridoxal 5'-phosphate biosynthesis. Functionally, catalyzes the formation of pyridoxal 5'-phosphate from ribose 5-phosphate (RBP), glyceraldehyde 3-phosphate (G3P) and ammonia. The ammonia is provided by the PdxT subunit. Can also use ribulose 5-phosphate and dihydroxyacetone phosphate as substrates, resulting from enzyme-catalyzed isomerization of RBP and G3P, respectively. The chain is Pyridoxal 5'-phosphate synthase subunit PdxS from Haemophilus influenzae (strain ATCC 51907 / DSM 11121 / KW20 / Rd).